The sequence spans 481 residues: Cysteine--tRNA ligase (481 aa).

Cys29 contributes to the Zn(2+) binding site. Positions 31–41 (PTTYDYIHLGN) match the 'HIGH' region motif. Residues Cys209, His234, and Glu238 each coordinate Zn(2+). The short motif at 267–271 (KMSKS) is the 'KMSKS' region element. Position 270 (Lys270) interacts with ATP.

The protein belongs to the class-I aminoacyl-tRNA synthetase family. In terms of assembly, monomer. Zn(2+) is required as a cofactor.

It is found in the cytoplasm. The enzyme catalyses tRNA(Cys) + L-cysteine + ATP = L-cysteinyl-tRNA(Cys) + AMP + diphosphate. The chain is Cysteine--tRNA ligase from Heliobacterium modesticaldum (strain ATCC 51547 / Ice1).